The following is a 282-amino-acid chain: Bis(5'-nucleosyl)-tetraphosphatase, symmetrical (282 aa).

Belongs to the Ap4A hydrolase family.

The enzyme catalyses P(1),P(4)-bis(5'-adenosyl) tetraphosphate + H2O = 2 ADP + 2 H(+). Hydrolyzes diadenosine 5',5'''-P1,P4-tetraphosphate to yield ADP. This chain is Bis(5'-nucleosyl)-tetraphosphatase, symmetrical, found in Escherichia coli O7:K1 (strain IAI39 / ExPEC).